A 572-amino-acid polypeptide reads, in one-letter code: Capsid vertex component 2 (572 aa).

Residues 1–58 (MFRPRFEPMNLPKDSNKPSTLMVLADRLNFISCAEGSSKYASKLFEGTLIDAEIMTNR) form an interaction with major capsid protein/MCP region.

This sequence belongs to the herpesviridae CVC2 protein family. Heterodimerizes with CVC1. Interacts with major capsid protein/MCP and triplex capsid protein 1/TRX1 at the pentamer vertices. Interacts with the large tegument protein/LTP.

The protein localises to the virion. Its subcellular location is the host nucleus. Its function is as follows. Capsid vertex-specific component that plays a role during viral DNA encapsidation, assuring correct genome cleavage and presumably stabilizing capsids that contain full-length viral genomes. Participates in the interaction between the capsid and the tegument through interaction with the large tegument protein/LTP. The chain is Capsid vertex component 2 from Infectious laryngotracheitis virus (strain Thorne V882) (ILTV).